Here is a 147-residue protein sequence, read N- to C-terminus: Probable cytidine deaminase (147 aa).

A CMP/dCMP-type deaminase domain is found at 4 to 130 (EELEKCIDAA…KLLPGLFSQE (127 aa)). Residue 45 to 51 (NVENSSY) participates in substrate binding. C56 serves as a coordination point for Zn(2+). Catalysis depends on E58, which acts as the Proton donor. Zn(2+) is bound by residues C90 and C93.

The protein belongs to the cytidine and deoxycytidylate deaminase family. Requires Zn(2+) as cofactor.

The catalysed reaction is cytidine + H2O + H(+) = uridine + NH4(+). It catalyses the reaction 2'-deoxycytidine + H2O + H(+) = 2'-deoxyuridine + NH4(+). Its function is as follows. This enzyme scavenges exogenous and endogenous cytidine and 2'-deoxycytidine for UMP synthesis. This Dictyostelium discoideum (Social amoeba) protein is Probable cytidine deaminase (cda).